Reading from the N-terminus, the 365-residue chain is Peptide chain release factor 2 (365 aa).

Position 251 is an N5-methylglutamine (Q251).

The protein belongs to the prokaryotic/mitochondrial release factor family. Post-translationally, methylated by PrmC. Methylation increases the termination efficiency of RF2.

The protein localises to the cytoplasm. Functionally, peptide chain release factor 2 directs the termination of translation in response to the peptide chain termination codons UGA and UAA. The chain is Peptide chain release factor 2 from Campylobacter jejuni subsp. doylei (strain ATCC BAA-1458 / RM4099 / 269.97).